A 302-amino-acid polypeptide reads, in one-letter code: Sulfate adenylyltransferase subunit 2 (302 aa).

This sequence belongs to the PAPS reductase family. CysD subfamily. In terms of assembly, heterodimer composed of CysD, the smaller subunit, and CysN.

It catalyses the reaction sulfate + ATP + H(+) = adenosine 5'-phosphosulfate + diphosphate. Its pathway is sulfur metabolism; hydrogen sulfide biosynthesis; sulfite from sulfate: step 1/3. In terms of biological role, with CysN forms the ATP sulfurylase (ATPS) that catalyzes the adenylation of sulfate producing adenosine 5'-phosphosulfate (APS) and diphosphate, the first enzymatic step in sulfur assimilation pathway. APS synthesis involves the formation of a high-energy phosphoric-sulfuric acid anhydride bond driven by GTP hydrolysis by CysN coupled to ATP hydrolysis by CysD. This Shewanella pealeana (strain ATCC 700345 / ANG-SQ1) protein is Sulfate adenylyltransferase subunit 2.